A 218-amino-acid chain; its full sequence is Thiopurine S-methyltransferase (218 aa).

The S-adenosyl-L-methionine site is built by tryptophan 10, leucine 45, glutamate 66, and arginine 123.

Belongs to the class I-like SAM-binding methyltransferase superfamily. TPMT family.

The protein resides in the cytoplasm. It catalyses the reaction S-adenosyl-L-methionine + a thiopurine = S-adenosyl-L-homocysteine + a thiopurine S-methylether.. The protein is Thiopurine S-methyltransferase of Shewanella sp. (strain ANA-3).